Here is a 210-residue protein sequence, read N- to C-terminus: Na(+)-translocating NADH-quinone reductase subunit D (210 aa).

A run of 5 helical transmembrane segments spans residues 42–62, 72–92, 103–123, 131–151, and 178–198; these read FVMT…VSLI, IIVQ…VLKA, VFVS…AFAM, FIDG…VAFF, and NGLM…IWAI.

Belongs to the NqrDE/RnfAE family. In terms of assembly, composed of six subunits; NqrA, NqrB, NqrC, NqrD, NqrE and NqrF.

It localises to the cell inner membrane. It catalyses the reaction a ubiquinone + n Na(+)(in) + NADH + H(+) = a ubiquinol + n Na(+)(out) + NAD(+). Functionally, NQR complex catalyzes the reduction of ubiquinone-1 to ubiquinol by two successive reactions, coupled with the transport of Na(+) ions from the cytoplasm to the periplasm. NqrA to NqrE are probably involved in the second step, the conversion of ubisemiquinone to ubiquinol. This Aliivibrio fischeri (strain ATCC 700601 / ES114) (Vibrio fischeri) protein is Na(+)-translocating NADH-quinone reductase subunit D.